A 240-amino-acid chain; its full sequence is Citrate synthase-lysine N-methyltransferase CSKMT, mitochondrial (240 aa).

A mitochondrion-targeting transit peptide spans Met-1–Ser-28.

Belongs to the methyltransferase superfamily.

Its subcellular location is the mitochondrion. The enzyme catalyses L-lysyl-[citrate synthase] + S-adenosyl-L-methionine = N(6)-methyl-L-lysyl-[citrate synthase] + S-adenosyl-L-homocysteine + H(+). The catalysed reaction is N(6)-methyl-L-lysyl-[citrate synthase] + S-adenosyl-L-methionine = N(6),N(6)-dimethyl-L-lysyl-[citrate synthase] + S-adenosyl-L-homocysteine + H(+). It catalyses the reaction N(6),N(6)-dimethyl-L-lysyl-[citrate synthase] + S-adenosyl-L-methionine = N(6),N(6),N(6)-trimethyl-L-lysyl-[citrate synthase] + S-adenosyl-L-homocysteine + H(+). Its activity is regulated as follows. Citrate synthase-lysine methyltransferase activity is inhibited by S-adenosylhomocysteine (AdoHcy) and oxaloacetate (OAA). Protein-lysine methyltransferase that selectively trimethylates citrate synthase (CS) in mitochondria. Seems to conduct trimethylation in a highly distributive manner rather than in a processive manner, and thus introduces a single methyl group per binding event. In Homo sapiens (Human), this protein is Citrate synthase-lysine N-methyltransferase CSKMT, mitochondrial.